Reading from the N-terminus, the 194-residue chain is Oligoribonuclease (194 aa).

One can recognise an Exonuclease domain in the interval 11 to 174 (LIWIDLEMTG…SDVRDSINEL (164 aa)). Tyr-132 is a catalytic residue.

Belongs to the oligoribonuclease family.

Its subcellular location is the cytoplasm. In terms of biological role, 3'-to-5' exoribonuclease specific for small oligoribonucleotides. This chain is Oligoribonuclease, found in Xanthomonas oryzae pv. oryzae (strain MAFF 311018).